The following is a 182-amino-acid chain: Transcription termination/antitermination protein NusG (182 aa).

The protein belongs to the NusG family.

In terms of biological role, participates in transcription elongation, termination and antitermination. This chain is Transcription termination/antitermination protein NusG, found in Chlamydia muridarum (strain MoPn / Nigg).